The primary structure comprises 262 residues: Type III pantothenate kinase (262 aa).

7 to 14 contributes to the ATP binding site; sequence DIGNTRLK. Residues Tyr96 and 103-106 each bind substrate; that span reads GSDR. The active-site Proton acceptor is the Asp105. Position 137 (Thr137) interacts with ATP. Residue Thr187 participates in substrate binding.

This sequence belongs to the type III pantothenate kinase family. As to quaternary structure, homodimer. Requires NH4(+) as cofactor. It depends on K(+) as a cofactor.

It localises to the cytoplasm. It carries out the reaction (R)-pantothenate + ATP = (R)-4'-phosphopantothenate + ADP + H(+). It functions in the pathway cofactor biosynthesis; coenzyme A biosynthesis; CoA from (R)-pantothenate: step 1/5. Functionally, catalyzes the phosphorylation of pantothenate (Pan), the first step in CoA biosynthesis. The chain is Type III pantothenate kinase from Leptothrix cholodnii (strain ATCC 51168 / LMG 8142 / SP-6) (Leptothrix discophora (strain SP-6)).